The chain runs to 123 residues: DCPSDWSPYGGHCYKLFKQRMNWADAENLCAQQRKESHLVSFHSSEEVDFLVLLTFPILGPDLYWTGLSNIWNGCSFEWSDGTKVNYNAWASESECVASKTTDNQWWSFPCTRLQYFVCEFQA.

3 disulfides stabilise this stretch: Cys2-Cys13, Cys30-Cys119, and Cys96-Cys111. The C-type lectin domain maps to 9–120 (YGGHCYKLFK…CTRLQYFVCE (112 aa)).

The protein belongs to the snaclec family. Heterodimer of subunits alpha and beta; disulfide-linked. Expressed by the venom gland.

The protein localises to the secreted. Its function is as follows. Binds to platelet GPIb (subunit alpha) (GP1BA) and functions as a receptor blocker for vWF binding to GPIb. The platelet GPIb-binding site resides on the GPIB-BP subunit beta and not on the alpha subunit. At a final concentration of 104 nM totally abolishes vWF-dependent shear-induced platelet aggregation (SIPA) at a high shear stress, but had no effect on SIPA at a low shear stress. In Bothrops jararaca (Jararaca), this protein is Snaclec GPIB-binding protein subunit beta.